The primary structure comprises 180 residues: Large ribosomal subunit protein uL5 (180 aa).

The protein belongs to the universal ribosomal protein uL5 family. As to quaternary structure, part of the 50S ribosomal subunit; part of the 5S rRNA/L5/L18/L25 subcomplex. Contacts the 5S rRNA and the P site tRNA. Forms a bridge to the 30S subunit in the 70S ribosome.

In terms of biological role, this is one of the proteins that bind and probably mediate the attachment of the 5S RNA into the large ribosomal subunit, where it forms part of the central protuberance. In the 70S ribosome it contacts protein S13 of the 30S subunit (bridge B1b), connecting the 2 subunits; this bridge is implicated in subunit movement. Contacts the P site tRNA; the 5S rRNA and some of its associated proteins might help stabilize positioning of ribosome-bound tRNAs. This is Large ribosomal subunit protein uL5 from Oenococcus oeni (strain ATCC BAA-331 / PSU-1).